The sequence spans 367 residues: Histone RNA hairpin-binding protein (367 aa).

Over residues 1–12 (MAQKTPTKGTRS) the composition is skewed to polar residues. Disordered regions lie at residues 1–24 (MAQK…SPIK) and 49–200 (EVTE…HWEE). Residues 57-73 (LASRLEEERRCKSESRR) are compositionally biased toward basic and acidic residues. Over residues 147–156 (SNASTINEGA) the composition is skewed to polar residues. A compositionally biased stretch (low complexity) spans 183–192 (SDSSSVASSP). The interval 206–275 (CTDEAVLKRR…KWKRSLYEYC (70 aa)) is RNA-binding. The segment at 342–367 (MDESTLKASTNTDPSAPTDFSKMSSH) is disordered. A compositionally biased stretch (polar residues) spans 347-356 (LKASTNTDPS).

Belongs to the SLBP family. Post-translationally, ubiquitinated by the CBC(fem-1) (Cul2-ElonginB-ElonginC) E3 ubiquitin-protein ligase complex, leading to its degradation.

Involved in histone pre-mRNA 3' processing. Required for chromosome condensation, progression of cell death and morphogenesis. The chain is Histone RNA hairpin-binding protein (cdl-1) from Caenorhabditis elegans.